A 597-amino-acid polypeptide reads, in one-letter code: Probable translation initiation factor IF-2 (597 aa).

The 218-residue stretch at 4 to 221 (IRQPIIAVLG…LIAGLSQKYL (218 aa)) folds into the tr-type G domain. A G1 region spans residues 13 to 20 (GHVDHGKT). 13–20 (GHVDHGKT) is a GTP binding site. The interval 38–42 (GITQH) is G2. The tract at residues 77-80 (DTPG) is G3. GTP is bound by residues 77 to 81 (DTPGH) and 131 to 134 (NKID). Positions 131–134 (NKID) are G4. The G5 stretch occupies residues 199-201 (SAK).

This sequence belongs to the TRAFAC class translation factor GTPase superfamily. Classic translation factor GTPase family. IF-2 subfamily.

Functionally, function in general translation initiation by promoting the binding of the formylmethionine-tRNA to ribosomes. Seems to function along with eIF-2. The polypeptide is Probable translation initiation factor IF-2 (Thermococcus onnurineus (strain NA1)).